The following is a 549-amino-acid chain: CTP synthase (549 aa).

The segment at 1-272 is amidoligase domain; it reads MPPKSTTTKH…DAYVVRKLDL (272 aa). Residue S19 participates in CTP binding. Residue S19 participates in UTP binding. ATP is bound by residues 20 to 25 and D77; that span reads SLGKGL. Mg(2+)-binding residues include D77 and E146. Residues 153 to 155, 193 to 198, and K229 each bind CTP; these read DIE and KTKPTQ. UTP-binding positions include 193-198 and K229; that span reads KTKPTQ. The region spanning 297–548 is the Glutamine amidotransferase type-1 domain; sequence NLALVGKYID…VKAAVERKTG (252 aa). Residue G360 coordinates L-glutamine. The active-site Nucleophile; for glutamine hydrolysis is C387. L-glutamine contacts are provided by residues 388–391, E411, and R473; that span reads LGLQ. Catalysis depends on residues H521 and E523.

Belongs to the CTP synthase family. Homotetramer.

The catalysed reaction is UTP + L-glutamine + ATP + H2O = CTP + L-glutamate + ADP + phosphate + 2 H(+). It carries out the reaction L-glutamine + H2O = L-glutamate + NH4(+). The enzyme catalyses UTP + NH4(+) + ATP = CTP + ADP + phosphate + 2 H(+). Its pathway is pyrimidine metabolism; CTP biosynthesis via de novo pathway; CTP from UDP: step 2/2. Its activity is regulated as follows. Allosterically activated by GTP, when glutamine is the substrate; GTP has no effect on the reaction when ammonia is the substrate. The allosteric effector GTP functions by stabilizing the protein conformation that binds the tetrahedral intermediate(s) formed during glutamine hydrolysis. Inhibited by the product CTP, via allosteric rather than competitive inhibition. In terms of biological role, catalyzes the ATP-dependent amination of UTP to CTP with either L-glutamine or ammonia as the source of nitrogen. Regulates intracellular CTP levels through interactions with the four ribonucleotide triphosphates. This chain is CTP synthase, found in Streptomyces avermitilis (strain ATCC 31267 / DSM 46492 / JCM 5070 / NBRC 14893 / NCIMB 12804 / NRRL 8165 / MA-4680).